The sequence spans 516 residues: Lipid II flippase MurJ (516 aa).

A run of 11 helical transmembrane segments spans residues 93–113 (WALAVLSVVGIAGASWVVFAV), 133–153 (IMFPYIVFISLTTLASGVLNT), 159–179 (LPAFAPVLLNVAFIAAAVFVA), 188–208 (ALAWAVIVGGVLQFLVQLPGL), 233–253 (VLAKMVPATFAVSVAQLSLII), 275–295 (LMEFPTALLGVALGTILLPSL), 317–337 (VTFLLAAPSALALFFFATPLT), 358–378 (LATYGIGLVGIILIKILAPGF), 390–409 (IAIGVLIVTQLSNYVFVPLI), 448–468 (FFVQLVGAALVLAGLMHWCAI), and 483–503 (IALMAACLVLFAALYFGMLWV).

It belongs to the MurJ/MviN family.

It localises to the cell inner membrane. It functions in the pathway cell wall biogenesis; peptidoglycan biosynthesis. In terms of biological role, involved in peptidoglycan biosynthesis. Transports lipid-linked peptidoglycan precursors from the inner to the outer leaflet of the cytoplasmic membrane. The sequence is that of Lipid II flippase MurJ from Burkholderia cenocepacia (strain ATCC BAA-245 / DSM 16553 / LMG 16656 / NCTC 13227 / J2315 / CF5610) (Burkholderia cepacia (strain J2315)).